Here is a 133-residue protein sequence, read N- to C-terminus: Ribonuclease P protein component (133 aa).

It belongs to the RnpA family. As to quaternary structure, consists of a catalytic RNA component (M1 or rnpB) and a protein subunit.

It catalyses the reaction Endonucleolytic cleavage of RNA, removing 5'-extranucleotides from tRNA precursor.. Functionally, RNaseP catalyzes the removal of the 5'-leader sequence from pre-tRNA to produce the mature 5'-terminus. It can also cleave other RNA substrates such as 4.5S RNA. The protein component plays an auxiliary but essential role in vivo by binding to the 5'-leader sequence and broadening the substrate specificity of the ribozyme. This is Ribonuclease P protein component from Paramagnetospirillum magneticum (strain ATCC 700264 / AMB-1) (Magnetospirillum magneticum).